Consider the following 2116-residue polypeptide: MEKLLDEVLAPGGPYNLTVGSWVRDHVRSIVEGAWEVRDVVTAAQKRAIVAVIPRPVFTQMQVSDHPALHAISRYTRRHWIEWGPKEALHVLIDPSPGLLREVARVERRWVALCLHRTARKLATALAETASEAWHADYVCALRGAPSGPFYVHPEDVPHGGRAVADRCLLYYTPMQMCELMRTIDATLLVAVDLWPVALAAHVGDDWDDLGIAWHLDHDGGCPADCRGAGAGPTPGYTRPCTTRIYQVLPDTAHPGRLYRCGPRLWTRDCAVAELSWEVAQHCGHQARVRAVRCTLPIRHVRSLQPSARVRLPDLVHLAAVGRWRWFSLPRPVFQRMLSYCKTLSPDAYYSERVFKFKNALSHSITLAGNVLQEGWKGTCAEEDALCAYVAFRAWQSNARLAGIMKSAKRCAADSLSVAGWLDTIWDAIKRFFGSVPLAERMEEWEQDAAVAAFDRGPLEDGGRHLDTVQPPKSPPRPEIAATWIVHAASADRHCACAPRCDAPRERPSAPAGPPDDEALIPPWLFAERRALRCREWDFEALRARADTAAAPAPLAPRPARCPTVLYRHPAHHGPWLTLDEPGEADAALVLCDPLGQPLRGPERHFAAGAHMCAQARGLQAFVRVVPPPERPWADGGARAWAKFFRGCAWAQRLLGEPAVMHLPYTDGDVPQLIALALRTLAQQGAALALSVRDLPGGAAFDAHAVTAAVRAGPGQSAATSPPPGDPPPPRRARRSQRHLDARGTPPPAPARDPPPPAPSPPAPPRAGDPVLPTSAGPADRARHAELEVAYEPSDPPTPTKADPDSDIVESYARAAGPVHLRVRDIMDPPPGCKVVVNAANEGLLAGSGVCGAIFANATAALAADCRRLAPCPTGEAVATPGHGCGYTHIIHAVAPRRPRDPAALEEGEALLERAYRSIVALAAARRWACVACPLLGAGVYGWSAAESLRAALAATRAEPAERVSLHICHPDRATLTHASVLVGAGLAARRVSPPPTEPLASCPAGDPGRPAQRSASPPATPLGDATAPEPRGCQGCELCRYTRVTNDRAYVNLWLERDRGATSWAMRIPEVVVYGPEHLATHFPLNHYSVLKPAEVRPPRGMCGSDMWRCRGWQGMPQVRCTPSNAHAALCRTGVPPRVSTRGGELDPNTCWFRAAANVAQAARACGAYTSAGCPKCAYGRALSEARTHEDFAALSQRWSASHADASPDGTGDPLDPLMETVGCACSRVWVGSEHEAPPDHLLVSLHRAPNGPWGVVLEVRARPEGGNPTGHFVCAVGGGPRRVSDRPHLWLAVPLSRGGGTCAATDEGLAQAYYDDLEVRRLGDDAMARAALASVQRPRKGPYNIRVWNMAAGAGKTTRILAAFTREDLYVCPTNALLHEIQAKLRARDIDIKNAATYERALTKPLAAYRRIYIDEAFTLGGEYCAFVASQTTAEVICVGDRDQCGPHYANNCRTPVPDRWPTERSRHTWRFPDCWAARLRAGLDYDIEGERTGTFACNLWDGRQVDLHLAFSRETVRRLHEAGIRAYTVREAQGMSVGTACIHVGRDGTDVALALVRDLAIVSLTRASDALYLHELEDGSLRAAGLSAFLDAGALAELKEVPAGIDRVVAVEQAPPPLPPADGIPEAQDVPPFCPRTLEELVFGRAGHPHYADLNRVTEGEREVRYMRISRHLLNKNHTEMPGTERVLSAVCAVRRYRAGEDGSTLRTAVARQHPRPFRQIPPPRVTAGVAQEWRMTYLRERIDLTDVYTQMGVAARELTDRYARRYPEIFAGMCTAQSLSVPAFLKATLKCVDAALGPRDTEDCHAAQGKAGLEIRAWAKEWVQVMSPHFRAIQKIIMRALRPQFLVAAGHTEPEVDAWWQAHYTTNAIEVDFTEFDMNQTLATRDVELEISAALLGLPCAEDYRALRAGSYCTLRELGSTETGCERTSGEPATLLHNTTVAMCMAMRMVPKGVRWAGIFQGDDMVIFLPEGARSAALKWTPAEVGLFGFHIPVKHVSTPTPSFCGHVGTAAGLFHDVMHQAIKVLCRRFDPDVLEEQQVALLDRLRGVYAALPDTVAANAAYYDYSAERVLAIVRELTAYARGRGLDHPATIGALEEIQTPYARANLHDAD.

Positions 36–49 (EVRDVVTAAQKRAI) are required for efficient proteolysis and P150-P90 interaction. Positions 57-247 (VFTQMQVSDH…TRPCTTRIYQ (191 aa)) constitute an Alphavirus-like MT domain. A compositionally biased stretch (low complexity) spans 711-720 (RAGPGQSAAT). The segment at 711–780 (RAGPGQSAAT…VLPTSAGPAD (70 aa)) is disordered. 2 stretches are compositionally biased toward pro residues: residues 721 to 730 (SPPPGDPPPP) and 745 to 767 (TPPPAPARDPPPPAPSPPAPPRA). Short sequence motifs (pxxPxR; class II SH3-binding) lie at residues 727-732 (PPPPRR), 747-752 (PPAPAR), and 761-766 (PPAPPR). The Macro domain occupies 806-985 (SDIVESYARA…LTHASVLVGA (180 aa)). Positions 992–1031 (VSPPPTEPLASCPAGDPGRPAQRSASPPATPLGDATAPEP) are disordered. Positions 1000-1301 (LASCPAGDPG…WLAVPLSRGG (302 aa)) constitute a Peptidase C27 domain. Residue Cys1152 is the For cysteine protease activity of the active site. Positions 1152-1183 (CWFRAAANVAQAARACGAYTSAGCPKCAYGRA) are interaction with host CALM1. Zn(2+) contacts are provided by Cys1175, Cys1178, Cys1227, and His1273. Positions 1193-1228 (FAALSQRWSASHADASPDGTGDPLDPLMETVGCACS) are EF-hand-like. Catalysis depends on His1273, which acts as the For cysteine protease activity. In terms of domain architecture, (+)RNA virus helicase ATP-binding spans 1320–1468 (EVRRLGDDAM…VPDRWPTERS (149 aa)). 1352–1359 (MAAGAGKT) provides a ligand contact to a ribonucleoside 5'-triphosphate. The (+)RNA virus helicase C-terminal domain occupies 1469–1609 (RHTWRFPDCW…ELKEVPAGID (141 aa)). The involved in P150-P90 interaction stretch occupies residues 1700–1900 (YRAGEDGSTL…VELEISAALL (201 aa)). In terms of domain architecture, RdRp catalytic spans 1870 to 1981 (TNAIEVDFTE…FLPEGARSAA (112 aa)). Positions 1902 to 1906 (LPCAE) match the Human RB1 binding motif.

Interacts with RNA-directed RNA polymerase p90. Interacts with host CALM1; this interaction is necessary for the protease activity and viral infectivity. Interacts with host C1QBP. Interacts with the capsid protein. As to quaternary structure, interacts with human RB1/retinoblastoma protein. Interacts with protease/methyltransferase p150. Zn(2+) serves as cofactor. Post-translationally, specific enzymatic cleavage by its own cysteine protease yield mature proteins p150 and p90.

It is found in the host membrane. The protein resides in the host cytoplasm. Its subcellular location is the host perinuclear region. It carries out the reaction RNA(n) + a ribonucleoside 5'-triphosphate = RNA(n+1) + diphosphate. The catalysed reaction is a ribonucleoside 5'-triphosphate + H2O = a ribonucleoside 5'-diphosphate + phosphate + H(+). The enzyme catalyses ATP + H2O = ADP + phosphate + H(+). Its function is as follows. Probable principal replicase for the negative-strand DNA, which replicates the 40S (+) genomic RNA into (-) antigenomic RNA. It cannot replicate the (-) into (+) until cleaved into p150 and p90 mature proteins. In terms of biological role, protease that cleaves the precursor polyprotein into two mature products. Together with RNA-directed RNA polymerase p90, replicates the 40S genomic and antigenomic RNA by recognizing replications specific signals. The heterodimer P150/p90 is probably the principal replicase for positive-strand genomic RNA and the 24S subgenomic RNA, which codes for structural proteins. Responsible for the mRNA-capping of the viral mRNAs. This function is necessary since all viral RNAs are synthesized in the cytoplasm, and host capping enzymes are restricted to the nucleus. Forms fibers late in the infection that may be involved in cell-to-cell spread of the virus RNA in the absence of virus particle formation. Together with protease/methyltransferase p150, replicates the 40S genomic and antigenomic RNA by recognizing replications specific signals. The heterodimer P150/p90 is probably the principal replicase for positive-strand genomic RNA and the 24S subgenomic RNA, which codes for structural proteins. A helicase activity is probably also present. In Rubella virus (strain TO-336) (RUBV), this protein is Non-structural polyprotein p200.